A 401-amino-acid polypeptide reads, in one-letter code: Exodeoxyribonuclease 7 large subunit (401 aa).

Belongs to the XseA family. As to quaternary structure, heterooligomer composed of large and small subunits.

It localises to the cytoplasm. The catalysed reaction is Exonucleolytic cleavage in either 5'- to 3'- or 3'- to 5'-direction to yield nucleoside 5'-phosphates.. Its function is as follows. Bidirectionally degrades single-stranded DNA into large acid-insoluble oligonucleotides, which are then degraded further into small acid-soluble oligonucleotides. The protein is Exodeoxyribonuclease 7 large subunit of Clostridium botulinum (strain Hall / ATCC 3502 / NCTC 13319 / Type A).